Here is a 237-residue protein sequence, read N- to C-terminus: Mitochondrial carrier-like protein L276 (237 aa).

3 Solcar repeats span residues Met1–Lys83, Tyr85–Tyr161, and Lys164–Lys233. Helical transmembrane passes span Ala11–Phe27, Val60–Leu76, Met91–Ile108, Ser140–Glu160, and Val166–Leu183. The Substrate recognition motif lies at Ile191–Leu196. A helical membrane pass occupies residues Tyr205–Thr226.

The protein belongs to the mitochondrial carrier (TC 2.A.29) family.

It localises to the host mitochondrion inner membrane. Functionally, transports dATP and to a lesser extent dTTP, TTP, UTP and ADP, possibly across the mitochondrial inner membrane. The protein is Mitochondrial carrier-like protein L276 of Acanthamoeba polyphaga (Amoeba).